The chain runs to 346 residues: Dimethyladenosine transferase 1, mitochondrial (346 aa).

A mitochondrion-targeting transit peptide spans 1–27 (MAASGKLSTCRLPPLPTIREIIKLLRL). Residues Leu38, Gly63, Glu85, Lys86, Asp111, Val112, and Asn141 each coordinate S-adenosyl-L-methionine.

Belongs to the class I-like SAM-binding methyltransferase superfamily. rRNA adenine N(6)-methyltransferase family. KsgA subfamily. As to quaternary structure, interacts with mitochondrial RNA polymerase POLRMT. Interacts with TFAM. Bound to the maturing mtSSU until the late stages of assembly. Ubiquitously expressed.

Its subcellular location is the mitochondrion. It catalyses the reaction adenosine(N)/adenosine(N+1) in rRNA + 4 S-adenosyl-L-methionine = N(6)-dimethyladenosine(N)/N(6)-dimethyladenosine(N+1) in rRNA + 4 S-adenosyl-L-homocysteine + 4 H(+). Mitochondrial methyltransferase which uses S-adenosyl methionine to dimethylate two highly conserved adjacent adenosine residues (A1583 and A1584) within the loop of helix 45 at the 3-prime end of 12S rRNA, thereby regulating the assembly or stability of the small subunit of the mitochondrial ribosome. Also required for basal transcription of mitochondrial DNA, probably via its interaction with POLRMT and TFAM. Stimulates transcription independently of the methyltransferase activity. In Homo sapiens (Human), this protein is Dimethyladenosine transferase 1, mitochondrial.